The sequence spans 431 residues: Glutamyl-tRNA(Gln) amidotransferase subunit A (431 aa).

Active-site charge relay system residues include Lys-55 and Ser-130. The active-site Acyl-ester intermediate is the Ser-154.

The protein belongs to the amidase family. GatA subfamily. Heterotrimer of A, B and C subunits.

It carries out the reaction L-glutamyl-tRNA(Gln) + L-glutamine + ATP + H2O = L-glutaminyl-tRNA(Gln) + L-glutamate + ADP + phosphate + H(+). In terms of biological role, allows the formation of correctly charged Gln-tRNA(Gln) through the transamidation of misacylated Glu-tRNA(Gln) in organisms which lack glutaminyl-tRNA synthetase. The reaction takes place in the presence of glutamine and ATP through an activated gamma-phospho-Glu-tRNA(Gln). This Methanococcus vannielii (strain ATCC 35089 / DSM 1224 / JCM 13029 / OCM 148 / SB) protein is Glutamyl-tRNA(Gln) amidotransferase subunit A.